The sequence spans 81 residues: Cytotoxin 5 (81 aa).

The N-terminal stretch at 1–21 is a signal peptide; the sequence is MKTLLLTLVVVTIVCLDLGYT. Cystine bridges form between Cys24–Cys42, Cys35–Cys59, Cys63–Cys74, and Cys75–Cys80.

Belongs to the three-finger toxin family. Short-chain subfamily. Type IA cytotoxin sub-subfamily. Monomer in solution; Homodimer and oligomer in the presence of negatively charged lipids forming a pore with a size ranging between 20 and 30 Angstroms. In terms of tissue distribution, expressed by the venom gland.

The protein resides in the secreted. Its subcellular location is the target cell membrane. In terms of biological role, shows cytolytic activity on many different cells by forming pore in lipid membranes. In vivo, increases heart rate or kills the animal by cardiac arrest. In addition, it binds to heparin with high affinity, interacts with Kv channel-interacting protein 1 (KCNIP1) in a calcium-independent manner, and binds to integrin alpha-V/beta-3 (ITGAV/ITGB3) with moderate affinity. The polypeptide is Cytotoxin 5 (Naja atra (Chinese cobra)).